The primary structure comprises 116 residues: Ribosome-binding factor A (116 aa).

The protein belongs to the RbfA family. Monomer. Binds 30S ribosomal subunits, but not 50S ribosomal subunits or 70S ribosomes.

It is found in the cytoplasm. Functionally, one of several proteins that assist in the late maturation steps of the functional core of the 30S ribosomal subunit. Associates with free 30S ribosomal subunits (but not with 30S subunits that are part of 70S ribosomes or polysomes). Required for efficient processing of 16S rRNA. May interact with the 5'-terminal helix region of 16S rRNA. In Buchnera aphidicola subsp. Cinara cedri (strain Cc), this protein is Ribosome-binding factor A.